The following is a 217-amino-acid chain: tRNA (guanine-N(7)-)-methyltransferase (217 aa).

The S-adenosyl-L-methionine site is built by glutamate 56, glutamate 81, aspartate 108, and aspartate 130. The active site involves aspartate 130. Positions 134 and 166 each coordinate substrate.

It belongs to the class I-like SAM-binding methyltransferase superfamily. TrmB family.

It catalyses the reaction guanosine(46) in tRNA + S-adenosyl-L-methionine = N(7)-methylguanosine(46) in tRNA + S-adenosyl-L-homocysteine. It functions in the pathway tRNA modification; N(7)-methylguanine-tRNA biosynthesis. Functionally, catalyzes the formation of N(7)-methylguanine at position 46 (m7G46) in tRNA. This Neorickettsia sennetsu (strain ATCC VR-367 / Miyayama) (Ehrlichia sennetsu) protein is tRNA (guanine-N(7)-)-methyltransferase.